The sequence spans 203 residues: Endoplasmic reticulum transmembrane protein 3 (203 aa).

At 1 to 6 (MSLYYT) the chain is on the lumenal side. A helical transmembrane segment spans residues 7–27 (LVFAILVVEIFMFSILALPIP). Residues 28–45 (SRYRRPLTLLLLKPFKSS) lie on the Cytoplasmic side of the membrane. The chain crosses the membrane as a helical span at residues 46–66 (TVQVAIKCVLGFILLLFIDCI). The Lumenal portion of the chain corresponds to 67-110 (NRVYSIDKELQLSSASQNNGAIIAQDRIEVLSRKFFAQRNMYLT). A helical transmembrane segment spans residues 111–131 (GITLFLTFVVVRTFGLVIELL). The Cytoplasmic segment spans residues 132–203 (TMKDIYRASP…KSESLQEEIN (72 aa)). The interval 142 to 171 (PVASSDVKKNDSVTAEAAAQSGASKDDHGD) is disordered.

It belongs to the BCAP29/BCAP31 family.

The protein resides in the endoplasmic reticulum membrane. In terms of biological role, may play a role in anterograde transport of membrane proteins from the endoplasmic reticulum to the Golgi. May be involved in invertase secretion. This is Endoplasmic reticulum transmembrane protein 3 (YET3) from Saccharomyces cerevisiae (strain ATCC 204508 / S288c) (Baker's yeast).